The following is a 166-amino-acid chain: Large ribosomal subunit protein uL10 (166 aa).

The protein belongs to the universal ribosomal protein uL10 family. Part of the ribosomal stalk of the 50S ribosomal subunit. The N-terminus interacts with L11 and the large rRNA to form the base of the stalk. The C-terminus forms an elongated spine to which L12 dimers bind in a sequential fashion forming a multimeric L10(L12)X complex.

Its function is as follows. Forms part of the ribosomal stalk, playing a central role in the interaction of the ribosome with GTP-bound translation factors. The polypeptide is Large ribosomal subunit protein uL10 (rplJ) (Neisseria meningitidis serogroup A / serotype 4A (strain DSM 15465 / Z2491)).